Consider the following 270-residue polypeptide: ATP synthase subunit a 1 (270 aa).

5 helical membrane-spanning segments follow: residues 38-58, 98-118, 143-163, 208-228, and 239-259; these read VHIDSLFFSWFTGLIFLGIFY, IAPLALTIFCWVFLMNVMDLV, DVNITMAMALGVFALMIYYSI, LFGNMFAGEVVFILCAAMLPW, and AIFHILVITIQAFVFMMLTIV.

This sequence belongs to the ATPase A chain family. As to quaternary structure, F-type ATPases have 2 components, CF(1) - the catalytic core - and CF(0) - the membrane proton channel. CF(1) has five subunits: alpha(3), beta(3), gamma(1), delta(1), epsilon(1). CF(0) has three main subunits: a(1), b(2) and c(9-12). The alpha and beta chains form an alternating ring which encloses part of the gamma chain. CF(1) is attached to CF(0) by a central stalk formed by the gamma and epsilon chains, while a peripheral stalk is formed by the delta and b chains.

The protein resides in the cell inner membrane. In terms of biological role, key component of the proton channel; it plays a direct role in the translocation of protons across the membrane. This chain is ATP synthase subunit a 1, found in Vibrio campbellii (strain ATCC BAA-1116).